Reading from the N-terminus, the 2376-residue chain is Cell morphogenesis protein PAG1 (2376 aa).

Residues Met1–Asn30 form a disordered region. Phosphoserine is present on Ser141. The segment at Ser275–Gly294 is disordered. Ser1144 is modified (phosphoserine). At Thr2264 the chain carries Phosphothreonine. Phosphoserine occurs at positions 2267 and 2355.

To S.pombe mor2. As to quaternary structure, associates with CBK1.

Seems to play a role in cell morphogenesis. The protein is Cell morphogenesis protein PAG1 (TAO3) of Saccharomyces cerevisiae (strain ATCC 204508 / S288c) (Baker's yeast).